Here is a 339-residue protein sequence, read N- to C-terminus: Adenylosuccinate synthetase (339 aa).

GTP is bound by residues 12 to 18 (GDEGKGS) and 42 to 44 (GHS). The active-site Proton acceptor is Asp-13. Asp-13 and Gly-42 together coordinate Mg(2+). Residues 13–16 (DEGK), 40–43 (NAGH), Thr-127, Arg-141, Gln-179, Thr-194, and Arg-256 contribute to the IMP site. His-43 functions as the Proton donor in the catalytic mechanism. Position 252–258 (252–258 (TVTGRRR)) interacts with substrate. Residues Arg-258, 284–286 (MLD), and 324–326 (KTG) contribute to the GTP site.

The protein belongs to the adenylosuccinate synthetase family. Homodimer. Mg(2+) serves as cofactor.

It localises to the cytoplasm. It catalyses the reaction IMP + L-aspartate + GTP = N(6)-(1,2-dicarboxyethyl)-AMP + GDP + phosphate + 2 H(+). Its pathway is purine metabolism; AMP biosynthesis via de novo pathway; AMP from IMP: step 1/2. In terms of biological role, plays an important role in the de novo pathway of purine nucleotide biosynthesis. Catalyzes the first committed step in the biosynthesis of AMP from IMP. The polypeptide is Adenylosuccinate synthetase (Thermococcus sibiricus (strain DSM 12597 / MM 739)).